The chain runs to 122 residues: Prefoldin subunit 1 (122 aa).

Belongs to the prefoldin subunit beta family. Heterohexamer of two PFD-alpha type and four PFD-beta type subunits.

In terms of biological role, binds specifically to cytosolic chaperonin (c-CPN) and transfers target proteins to it. Binds to nascent polypeptide chain and promotes folding in an environment in which there are many competing pathways for nonnative proteins. This is Prefoldin subunit 1 (pfdn1) from Tetraodon nigroviridis (Spotted green pufferfish).